Reading from the N-terminus, the 261-residue chain is Small ribosomal subunit protein uS2 (261 aa).

Residues 224–261 (GRQGEDDEAVQQEEVAEGVSKDSLEDLKKTVEEGSNEE) are disordered. Residues 228–239 (EDDEAVQQEEVA) show a composition bias toward acidic residues. Residues 242–255 (VSKDSLEDLKKTVE) show a composition bias toward basic and acidic residues.

The protein belongs to the universal ribosomal protein uS2 family.

This is Small ribosomal subunit protein uS2 (rpsB) from Pediococcus acidilactici.